The chain runs to 431 residues: 3-isopropylmalate dehydratase large subunit (431 aa).

[4Fe-4S] cluster contacts are provided by cysteine 308, cysteine 368, and cysteine 371.

Belongs to the aconitase/IPM isomerase family. LeuC type 2 subfamily. As to quaternary structure, heterodimer of LeuC and LeuD. The cofactor is [4Fe-4S] cluster.

The enzyme catalyses (2R,3S)-3-isopropylmalate = (2S)-2-isopropylmalate. It participates in amino-acid biosynthesis; L-leucine biosynthesis; L-leucine from 3-methyl-2-oxobutanoate: step 2/4. Catalyzes the isomerization between 2-isopropylmalate and 3-isopropylmalate, via the formation of 2-isopropylmaleate. The protein is 3-isopropylmalate dehydratase large subunit of Desulfosudis oleivorans (strain DSM 6200 / JCM 39069 / Hxd3) (Desulfococcus oleovorans).